We begin with the raw amino-acid sequence, 277 residues long: Phosphoribosylaminoimidazole-succinocarboxamide synthase (277 aa).

This sequence belongs to the SAICAR synthetase family.

The enzyme catalyses 5-amino-1-(5-phospho-D-ribosyl)imidazole-4-carboxylate + L-aspartate + ATP = (2S)-2-[5-amino-1-(5-phospho-beta-D-ribosyl)imidazole-4-carboxamido]succinate + ADP + phosphate + 2 H(+). It participates in purine metabolism; IMP biosynthesis via de novo pathway; 5-amino-1-(5-phospho-D-ribosyl)imidazole-4-carboxamide from 5-amino-1-(5-phospho-D-ribosyl)imidazole-4-carboxylate: step 1/2. This is Phosphoribosylaminoimidazole-succinocarboxamide synthase from Salinispora tropica (strain ATCC BAA-916 / DSM 44818 / JCM 13857 / NBRC 105044 / CNB-440).